The following is a 350-amino-acid chain: Ion-translocating oxidoreductase complex subunit D (350 aa).

3 consecutive transmembrane segments (helical) span residues 36–56 (CYFF…IAVA), 89–109 (IPAL…ILVV), and 124–144 (AMAA…TWVA). At threonine 185 the chain carries FMN phosphoryl threonine. Transmembrane regions (helical) follow at residues 212 to 232 (GFGI…LVML), 239 to 259 (WQIS…GYLL), 265 to 285 (MGPL…FIAT), 298 to 318 (LIFG…CGYP), and 319 to 339 (DAFA…DYYV).

This sequence belongs to the NqrB/RnfD family. As to quaternary structure, the complex is composed of six subunits: RnfA, RnfB, RnfC, RnfD, RnfE and RnfG. Requires FMN as cofactor.

The protein localises to the cell inner membrane. Part of a membrane-bound complex that couples electron transfer with translocation of ions across the membrane. This is Ion-translocating oxidoreductase complex subunit D from Shewanella loihica (strain ATCC BAA-1088 / PV-4).